Here is a 492-residue protein sequence, read N- to C-terminus: Ammonium transporter MEP1 (492 aa).

Residues 1-18 lie on the Extracellular side of the membrane; the sequence is MESRTTGPLTTETYDGPT. Residues 19 to 39 traverse the membrane as a helical segment; the sequence is VAFMILGAALVFFMVPGLGFL. At 40–49 the chain is on the cytoplasmic side; that stretch reads YSGLARRKSA. The helical transmembrane segment at 50–70 threads the bilayer; sequence LALIWVVLMATLVGILQWYFW. At 71–109 the chain is on the extracellular side; the sequence is GYSLAFSKSAPNNKFIGNLDSFGFRNVYGKKFDEDAYPE. A helical membrane pass occupies residues 110-130; sequence LAYATFQMMFSCVNLSIIAGA. The Cytoplasmic segment spans residues 131 to 140; sequence TAERGRLLPH. Residues 141–161 form a helical membrane-spanning segment; sequence MVFLFILATIGYCPVTYWIWS. The Extracellular portion of the chain corresponds to 162–174; it reads PGGWAYQWGVLDW. A helical membrane pass occupies residues 175 to 195; the sequence is AGGGNIEILSAVSGFVYSWFL. The Cytoplasmic segment spans residues 196 to 210; sequence GKRNEKLLINFRPHN. Residues 211-231 traverse the membrane as a helical segment; that stretch reads VSLVTLGTSILWFGWLLFNSA. At 232-240 the chain is on the extracellular side; sequence SSLSPNLRS. A helical membrane pass occupies residues 241–261; sequence VYAFMNTCLSAITGGMTWCLL. At 262 to 268 the chain is on the cytoplasmic side; that stretch reads DYRSEKK. The chain crosses the membrane as a helical span at residues 269-289; that stretch reads WSTVGLCSGIISGLVAATPSS. A topological domain (extracellular) is located at residue G290. The chain crosses the membrane as a helical span at residues 291 to 311; sequence CITLYGSLIQGIVAGVVCNFA. Topologically, residues 312 to 331 are cytoplasmic; sequence TKLKYYAKVDDAMDILAEHG. Residues 332 to 352 form a helical membrane-spanning segment; it reads VAGVIGLIFNALFGADWVIGM. Residues 353–373 are Extracellular-facing; sequence DGTTEHEGGWVTHNYKQMYKQ. Residues 374–394 traverse the membrane as a helical segment; it reads IAYIAASIGYTAAVTAIICFV. Residues 395-492 are Cytoplasmic-facing; that stretch reads LGYIPGMRLR…PIHQEDPANR (98 aa). Residues S442 and S445 each carry the phosphoserine modification. Positions 455–492 are disordered; that stretch reads HLAAERSSSGTNSSSDGNGEMIQSEKILPIHQEDPANR. Residues 461–473 are compositionally biased toward low complexity; it reads SSSGTNSSSDGNG.

It belongs to the ammonia transporter channel (TC 1.A.11.2) family.

It is found in the membrane. Its function is as follows. Transporter for ammonium (both charged and uncharged NH3 and NH4) to use as a nitrogen source. Can also transport methylamine. The affinity of MEP1 is about twenty times lower than that of MEP2. MEP3 has the lowest affinity. This is Ammonium transporter MEP1 (MEP1) from Saccharomyces cerevisiae (strain ATCC 204508 / S288c) (Baker's yeast).